A 265-amino-acid chain; its full sequence is Speedy protein E13 (265 aa).

The disordered stretch occupies residues 1 to 80 (MGQILGKIMM…EPEKELAPEP (80 aa)). The span at 66–80 (DESDDEPEKELAPEP) shows a compositional bias: acidic residues.

This sequence belongs to the Speedy/Ringo family.

The protein is Speedy protein E13 of Homo sapiens (Human).